The primary structure comprises 76 residues: Conotoxin ArMLCL-022 (76 aa).

The signal sequence occupies residues 1–19; the sequence is MLCLPVFIILLLLASTAAS. Positions 20-52 are excised as a propeptide; sequence NPLETRIQSDLIRAALEDADMKTERGFLGVLMK.

The protein belongs to the conotoxin T superfamily. As to expression, expressed by the venom duct.

The protein localises to the secreted. In Conus arenatus (Sand-dusted cone), this protein is Conotoxin ArMLCL-022.